The primary structure comprises 279 residues: MQKIVQTDEITNTQAFRKGKRKRTETMDSENANSDMDKGQRDPYSGNAFLPGESSSEDEEPLAELSKEELCAKIKSLKEKLTNTRKENSRLRQSLVMLQVLPQAVTQFEELVGMAEALLKGGGTMSTSASTLWRATNNSSPDSFASTCSNSNSNSSSPVSLKPEEEHQTDEKQFQIEKWQIARCNKSKPQKFINDLMQVLYTNEYMATHSLTGAKSSTSRDKAVKPAMNQNEVQEIIGVTKQLFPNTDDVSIRRMIGQKLNNCTKKPNLSKNLNSQDIK.

Residues 1 to 15 (MQKIVQTDEITNTQA) show a composition bias toward polar residues. Disordered stretches follow at residues 1-65 (MQKI…LAEL) and 134-172 (RATN…TDEK). A coiled-coil region spans residues 62–99 (LAELSKEELCAKIKSLKEKLTNTRKENSRLRQSLVMLQ). The span at 134–148 (RATNNSSPDSFASTC) shows a compositional bias: polar residues. A compositionally biased stretch (basic and acidic residues) spans 162 to 172 (KPEEEHQTDEK). The 101-residue stretch at 171–271 (EKQFQIEKWQ…NCTKKPNLSK (101 aa)) folds into the BEN domain.

Interacts (via BEN domain) with RBPJ.

The protein localises to the nucleus. Functionally, acts as a corepressor of recombining binding protein suppressor hairless (RBPJ) and inhibits Notch signaling in neural stem cells, thereby opposing their self-renewal and promoting neurogenesis. This Homo sapiens (Human) protein is BEN domain-containing protein 6 (BEND6).